Reading from the N-terminus, the 799-residue chain is MVDQLTQHDPRRIGPFEVLGRLGAGGMGLVYLARSASGRRVAIKTVRTELAEDQLFRVRFTREVEAARAVSGFYTAAVVDADPRAAVPWLATAYVPAPSLEEIVNECGPMPAQAVRWLAAGVAEALQSIHGAGLVHRDLKPSNVLVVEDGPRVIDFGIASGVSNTRLTMTNVAVGTPAYMSPEQAKDSRSVTGASDVFSLGSMLVFAATGHPPFHGANPVETVFMLLREGPDLEGLPDELRPLIESCMQMEATGRPNPADLQAQLAPHLFGSGSDDSGTASAWLPERAVGLIEGRRNGRPAVKPATTAGGRGHGHGPSGARAPVHAPPLPPPPAHDPVVPAPPAHVPAVPAPVGAPDGGPVRLPGAAVPIGPGPRVADMRAAAVAAPPPESALAASWSRPRPGVNGADPAVPAPAPAPPEASPAGWRPWRFRMSNDVWGTPRVAEDLVYVTSFEVHALDVATGRRRFKTRDVAWSMAVADGRIHASDGPTLFALDAREGADLWRVQTDAWVYSLQADRGTVLTATRGGGVQAWEASAGQKLWEVTGAQTDFESPEAGAALHDGTAYVWQDARLRALDARTGDERWSYPIGDAASCGGVPVRLTQAPDGYVYVAAGTRVLALEVASGHVRWHFEAPAVFLAPPTFVPGPAVTGGGVYLADYLGTVYALDATDGRDRWRIATEARSSTDPVLVAAGHVHVGSGKGLYTLDAVTGTPKWRFQAGGDIVGAPAVAEGRIHFGSSDHLLYTLKADDGRLRWKLATGGEITGSPVVRDGIVYACSKDRCVYALDAEKGTGTARTT.

The Protein kinase domain occupies 16–271 (FEVLGRLGAG…QAQLAPHLFG (256 aa)). ATP contacts are provided by residues 22 to 30 (LGAGGMGLV) and lysine 44. Serine 71 carries the phosphoserine; by autocatalysis modification. Aspartate 138 functions as the Proton acceptor in the catalytic mechanism. Residue threonine 168 is modified to Phosphothreonine; by autocatalysis. Disordered regions lie at residues 295–343 (RRNG…PAPP) and 393–426 (LAAS…PAGW). Pro residues-rich tracts occupy residues 325–343 (HAPP…PAPP) and 411–421 (VPAPAPAPPEA).

Belongs to the protein kinase superfamily. Ser/Thr protein kinase family. Interacts (via the N-terminal kinase domain) with KbpA; the interaction prevents autophosphorylation of AfsK. Autophosphorylated mainly on threonine residues. Some phosphorylation on serine residues. Autophosphorylation on Thr-168 is the major site enhancing kinase activity towards AfsR, and is regulated though interaction with KbpA.

It carries out the reaction L-seryl-[protein] + ATP = O-phospho-L-seryl-[protein] + ADP + H(+). The catalysed reaction is L-threonyl-[protein] + ATP = O-phospho-L-threonyl-[protein] + ADP + H(+). Involved in the regulation of secondary metabolism by phosphorylating, on both Ser and Thr, the AfsR global regulatory protein involved in the control of secondary metabolism. This is Serine/threonine-protein kinase AfsK (afsK) from Streptomyces coelicolor (strain ATCC BAA-471 / A3(2) / M145).